We begin with the raw amino-acid sequence, 440 residues long: Heat stress transcription factor A-4b (440 aa).

A coiled-coil region spans residues 121 to 181 (NERKDYEEEI…QRSLISYVRE (61 aa)). The interval 133–183 (LKSDNAALSSELQNNTLKKLNMEKRMQALEEKLFVVEDQQRSLISYVREIV) is hydrophobic repeat HR-A/B. The short motif at 158-163 (MQALEE) is the Nuclear export signal element. The short motif at 200–204 (RKKRR) is the Nuclear localization signal element. Residues 264 to 417 (DISYDDGVPG…EMKSGDRQHL (154 aa)) are disordered. Residues 295 to 305 (SPPTRMRTSSA) are compositionally biased toward polar residues. Residues 333–343 (SRVDTRAKVSE) are compositionally biased toward basic and acidic residues. Positions 375 to 384 (DGFWQQFLTE) match the AHA motif. The span at 380–390 (QFLTEQPGSSD) shows a compositional bias: polar residues. Residues 391-417 (AHQEAQSERRDGGNKVDEMKSGDRQHL) show a composition bias toward basic and acidic residues.

It belongs to the HSF family. Class A subfamily. As to quaternary structure, homotrimer. Exhibits temperature-dependent phosphorylation.

The protein resides in the cytoplasm. Its subcellular location is the nucleus. Functionally, transcriptional regulator that specifically binds DNA of heat shock promoter elements (HSE). The chain is Heat stress transcription factor A-4b (HSFA4B) from Oryza sativa subsp. japonica (Rice).